We begin with the raw amino-acid sequence, 352 residues long: 4-hydroxybenzaldehyde synthase, chloroplastic (352 aa).

Residue Asn-122 is glycosylated (N-linked (GlcNAc...) asparagine). 2 disulfides stabilise this stretch: Cys-159/Cys-199 and Cys-190/Cys-231. A glycan (N-linked (GlcNAc...) asparagine) is linked at Asn-247. A disulfide bridge links Cys-289 with Cys-339. Catalysis depends on residues His-298 and Asn-318.

This sequence belongs to the peptidase C1 family. In terms of assembly, forms homodimers, homotrimers and homotetramers. As to expression, mainly expressed in pods, but also present in stems, roots, leaves and embryos (at protein level).

It is found in the plastid. It localises to the chloroplast. It catalyses the reaction (E)-4-coumarate + H2O = 4-hydroxybenzaldehyde + acetate. It participates in aromatic compound metabolism; phenylpropanoid biosynthesis. Its activity is regulated as follows. Inhibited by ascorbate. In terms of biological role, involved in the biosynthesis of vanillin (4-hydroxy-3-methoxy-benzaldehyde) and derivative natural products, key components of vanilla pods flavor. Catalyzes the conversion of (E)-4-coumarate to 4-hydroxybenzaldehyde, a vanillin precursor. Mediates the conversion of ferulic acid to 3-methoxy-4-hydroxybenzaldehyde with a very low efficiency. Cannot use cinnamic, caffeic, sinapic and o-coumaric acids as substrates. The protein is 4-hydroxybenzaldehyde synthase, chloroplastic of Vanilla planifolia (Vanilla).